Reading from the N-terminus, the 231-residue chain is 5'-methylthioadenosine/S-adenosylhomocysteine nucleosidase (231 aa).

Catalysis depends on glutamate 12, which acts as the Proton acceptor. Substrate contacts are provided by residues glycine 78, methionine 153, and methionine 174 to glutamate 175. Catalysis depends on aspartate 198, which acts as the Proton donor.

The protein belongs to the PNP/UDP phosphorylase family. MtnN subfamily.

It carries out the reaction S-adenosyl-L-homocysteine + H2O = S-(5-deoxy-D-ribos-5-yl)-L-homocysteine + adenine. The enzyme catalyses S-methyl-5'-thioadenosine + H2O = 5-(methylsulfanyl)-D-ribose + adenine. The catalysed reaction is 5'-deoxyadenosine + H2O = 5-deoxy-D-ribose + adenine. The protein operates within amino-acid biosynthesis; L-methionine biosynthesis via salvage pathway; S-methyl-5-thio-alpha-D-ribose 1-phosphate from S-methyl-5'-thioadenosine (hydrolase route): step 1/2. Catalyzes the irreversible cleavage of the glycosidic bond in both 5'-methylthioadenosine (MTA) and S-adenosylhomocysteine (SAH/AdoHcy) to adenine and the corresponding thioribose, 5'-methylthioribose and S-ribosylhomocysteine, respectively. Also cleaves 5'-deoxyadenosine, a toxic by-product of radical S-adenosylmethionine (SAM) enzymes, into 5-deoxyribose and adenine. The protein is 5'-methylthioadenosine/S-adenosylhomocysteine nucleosidase of Bacillus cereus (strain G9842).